Reading from the N-terminus, the 217-residue chain is MAYILPGSSLDADLYAITDDALSFNRSVIEVVKQLLDAGIRIIQYREKNKSSNSMLKDCITIKKLTEEANACFIVNDHVDIAVLCNADGVHLGQDDLPVDKVRELIGKEKIIGLSTHSPQQAQKAIEMGADYIGVGPLYPTKTKKDVCEPVTISYLDWVVSHIAIPFVAIGGIKQHNIQEVIQHGAKCCALVSEILSAPNIPLRIQELRQAILLAHT.

Residues 44-48 (QYREK) and Asn-76 each bind 4-amino-2-methyl-5-(diphosphooxymethyl)pyrimidine. Mg(2+) contacts are provided by Asp-77 and Asp-96. Position 115 (Ser-115) interacts with 4-amino-2-methyl-5-(diphosphooxymethyl)pyrimidine. 141-143 (TKT) contributes to the 2-[(2R,5Z)-2-carboxy-4-methylthiazol-5(2H)-ylidene]ethyl phosphate binding site. Lys-144 serves as a coordination point for 4-amino-2-methyl-5-(diphosphooxymethyl)pyrimidine. Residues Gly-172 and 192 to 193 (VS) each bind 2-[(2R,5Z)-2-carboxy-4-methylthiazol-5(2H)-ylidene]ethyl phosphate.

It belongs to the thiamine-phosphate synthase family. The cofactor is Mg(2+).

The enzyme catalyses 2-[(2R,5Z)-2-carboxy-4-methylthiazol-5(2H)-ylidene]ethyl phosphate + 4-amino-2-methyl-5-(diphosphooxymethyl)pyrimidine + 2 H(+) = thiamine phosphate + CO2 + diphosphate. The catalysed reaction is 2-(2-carboxy-4-methylthiazol-5-yl)ethyl phosphate + 4-amino-2-methyl-5-(diphosphooxymethyl)pyrimidine + 2 H(+) = thiamine phosphate + CO2 + diphosphate. It catalyses the reaction 4-methyl-5-(2-phosphooxyethyl)-thiazole + 4-amino-2-methyl-5-(diphosphooxymethyl)pyrimidine + H(+) = thiamine phosphate + diphosphate. It participates in cofactor biosynthesis; thiamine diphosphate biosynthesis; thiamine phosphate from 4-amino-2-methyl-5-diphosphomethylpyrimidine and 4-methyl-5-(2-phosphoethyl)-thiazole: step 1/1. Its function is as follows. Condenses 4-methyl-5-(beta-hydroxyethyl)thiazole monophosphate (THZ-P) and 2-methyl-4-amino-5-hydroxymethyl pyrimidine pyrophosphate (HMP-PP) to form thiamine monophosphate (TMP). This chain is Thiamine-phosphate synthase, found in Lawsonia intracellularis (strain PHE/MN1-00).